The following is a 261-amino-acid chain: RING finger and CHY zinc finger domain-containing protein 1 (261 aa).

The CHY-type zinc-finger motif lies at Q13–T80. Residues C20, H22, C33, C34, C40, C43, H44, H50, C62, C65, C75, C78, C87, C90, H101, C102, C105, C108, H118, C119, C122, C125, H134, and C136 each contribute to the Zn(2+) site. Residues F82–N144 form a CTCHY-type zinc finger. Residues C145–S189 form an RING-type zinc finger. The residue at position 257 (S257) is a Phosphoserine.

As to quaternary structure, monomer and homodimer. Interacts with AR, MDM2, KAT5, PLAG1, PLAGL2, COPE, UBE2D2 and GORAB/NTKLBP1. In terms of processing, subject to ubiquitination and proteasomal degradation. Interaction with PLAGL2 or KAT5 enhances protein stability.

It localises to the nucleus. The protein localises to the nucleus speckle. It is found in the cytoplasm. It catalyses the reaction S-ubiquitinyl-[E2 ubiquitin-conjugating enzyme]-L-cysteine + [acceptor protein]-L-lysine = [E2 ubiquitin-conjugating enzyme]-L-cysteine + N(6)-ubiquitinyl-[acceptor protein]-L-lysine.. It functions in the pathway protein modification; protein ubiquitination. Its function is as follows. E3 ubiquitin-protein ligase that mediates ubiquitination of target proteins, including p53/TP53, TP73, HDAC1 and CDKN1B. Mediates ubiquitination and degradation of p53/TP53; preferentially acts on tetrameric p53/TP53. Catalyzes monoubiquitinates the translesion DNA polymerase POLH. Involved in the ribosome-associated quality control (RQC) pathway, which mediates the extraction of incompletely synthesized nascent chains from stalled ribosomes: RCHY1 acts downstream of NEMF and recognizes CAT tails associated with stalled nascent chains, leading to their ubiquitination and degradation. Has no E3 ubiquitin-protein ligase activity. This Homo sapiens (Human) protein is RING finger and CHY zinc finger domain-containing protein 1 (RCHY1).